The following is an 82-amino-acid chain: Small ribosomal subunit protein uS17 (82 aa).

The protein belongs to the universal ribosomal protein uS17 family. As to quaternary structure, part of the 30S ribosomal subunit.

In terms of biological role, one of the primary rRNA binding proteins, it binds specifically to the 5'-end of 16S ribosomal RNA. The polypeptide is Small ribosomal subunit protein uS17 (Shewanella frigidimarina (strain NCIMB 400)).